The following is a 708-amino-acid chain: C-Jun-amino-terminal kinase-interacting protein 1 (708 aa).

A disordered region spans residues 1 to 26 (MAERESGLSGGAASPPAASPFLGLHI). The segment covering 11 to 24 (GAASPPAASPFLGL) has biased composition (low complexity). 3 positions are modified to phosphoserine: S14, S28, and S39. Residues 69-368 (PPRAGLLSAG…PPRASLSSDT (300 aa)) are disordered. Positions 71–87 (RAGLLSAGSSGSAGSRL) are enriched in low complexity. The residue at position 103 (T103) is a Phosphothreonine; by MAPK8, MAPK9 and MAPK10. Over residues 105-116 (GAEDDEEDDDEL) the composition is skewed to acidic residues. Positions 126 to 282 (SKAESGQEPA…EATEEIYLTP (157 aa)) are JNK-binding domain (JBD). Phosphoserine is present on S149. The segment at 154 to 173 (RPKRPTTLNLFPQVPRSQDT) is minimal inhibitory domain (MID). Residues 159–179 (TTLNLFPQVPRSQDTLNNNSL) are compositionally biased toward polar residues. Phosphoserine occurs at positions 178, 184, 190, 192, and 193. Residues 191–201 (RSSSPLKTGEQ) show a composition bias toward polar residues. T202 bears the Phosphothreonine; by MAPK8, MAPK9 and MAPK10 mark. Phosphoserine is present on S211. Polar residues predominate over residues 220-232 (PVPTQDRGTSTDS). Residues 264 to 274 (IHYQADVRLEA) show a composition bias toward basic and acidic residues. An interaction with MAP3K7 region spans residues 280-468 (LTPVQRPPDP…NVFMSGRSRS (189 aa)). Polar residues predominate over residues 292–308 (PTSTFLPPTESRMSVSS). Residues S308, S325, S327, S337, S352, S363, S366, S404, and S406 each carry the phosphoserine modification. Short sequence motifs (D-box) lie at residues 350–357 (RGSLGEPP) and 361–369 (RASLSSDTS). A Phosphothreonine modification is found at T408. The segment at 426–448 (EEYEEAPQPRPPTCLSEDSTPDE) is disordered. A phosphoserine mark is found at S441 and S444. A Phosphothreonine modification is found at T445. Residues S466, S468, S469, and S470 each carry the phosphoserine modification. The tract at residues 468–657 (SSSAESFGLF…PKNNKYFGFI (190 aa)) is interaction with VRK2. The SH3 domain occupies 485–546 (EHEQTHRAIF…PAYYAIEVTK (62 aa)). The region spanning 558–697 (SDWIDQFRVK…FQQFYKQFVE (140 aa)) is the PID domain.

The protein belongs to the JIP scaffold family. As to quaternary structure, forms homo- or heterooligomeric complexes. Binds specific components of the JNK signaling pathway namely MAPK8/JNK1, MAPK9/JNK2, MAPK10/JNK3, MAP2K7/MKK7, MAP3K11/MLK3 and DLK1. Also binds the proline-rich domain-containing splice variant of apolipoprotein E receptor 2 (ApoER2). Interacts, via the PID domain, with ARHGEF28. Binds the cytoplasmic tails of LRP1 and LRP2 (Megalin). Binds the TPR motif-containing C-terminal of kinesin light chain, KLC1. Pre-assembled MAPK8IP1 scaffolding complexes are then transported as a cargo of kinesin, to the required subcellular location. Interacts with the cytoplasmic domain of APP. Interacts with DCLK2, VRK2 and MAP3K7/TAK1. Found in a complex with SH3RF1, RAC1, MAP3K11/MLK3, MAP2K7/MKK7 and MAPK8/JNK1. Found in a complex with SH3RF1, RAC2, MAP3K7/TAK1, MAP2K7/MKK7, MAPK8/JNK1 and MAPK9/JNK2. Interacts with SH3RF2. Phosphorylated by MAPK8, MAPK9 and MAPK10. Phosphorylation on Thr-103 is also necessary for the dissociation and activation of MAP3K12. Phosphorylated by VRK2. Hyperphosphorylated during mitosis following activation of stress-activated and MAP kinases. In terms of processing, ubiquitinated. Two preliminary events are required to prime for ubiquitination; phosphorylation and an increased in intracellular calcium concentration. Then, the calcium influx initiates ubiquitination and degradation by the ubiquitin-proteasome pathway. Highly expressed in brain and pancreatic beta-cells. Weaker expression found in kidney.

It localises to the cytoplasm. The protein resides in the perinuclear region. The protein localises to the nucleus. Its subcellular location is the endoplasmic reticulum membrane. It is found in the mitochondrion membrane. Its function is as follows. The JNK-interacting protein (JIP) group of scaffold proteins selectively mediates JNK signaling by aggregating specific components of the MAPK cascade to form a functional JNK signaling module. Required for JNK activation in response to excitotoxic stress. Cytoplasmic MAPK8IP1 causes inhibition of JNK-regulated activity by retaining JNK in the cytoplasm and thus inhibiting the JNK phosphorylation of c-Jun. May also participate in ApoER2-specific reelin signaling. Directly, or indirectly, regulates GLUT2 gene expression and beta-cell function. Appears to have a role in cell signaling in mature and developing nerve terminals. May function as a regulator of vesicle transport, through interactions with the JNK-signaling components and motor proteins. Functions as an anti-apoptotic protein and whose level seems to influence the beta-cell death or survival response. Acts as a scaffold protein that coordinates with SH3RF1 in organizing different components of the JNK pathway, including RAC1 or RAC2, MAP3K11/MLK3 or MAP3K7/TAK1, MAP2K7/MKK7, MAPK8/JNK1 and/or MAPK9/JNK2 into a functional multiprotein complex to ensure the effective activation of the JNK signaling pathway. Regulates the activation of MAPK8/JNK1 and differentiation of CD8(+) T-cells. In Rattus norvegicus (Rat), this protein is C-Jun-amino-terminal kinase-interacting protein 1 (Mapk8ip1).